Here is a 65-residue protein sequence, read N- to C-terminus: Orally active insecticidal peptide-3 (65 aa).

A signal peptide spans 1–21 (MKTSVLFAILGLALLFCLSFG). Positions 22–29 (VELEETGR) are excised as a propeptide. Cystine bridges form between C31-C46, C38-C51, and C45-C58. Position 62 is a proline amide (P62).

This sequence belongs to the neurotoxin 10 (Hwtx-1) family. 46 (Jztx-7/10/12) subfamily. As to expression, expressed by the venom gland.

Its subcellular location is the secreted. Functionally, probable ion channel inhibitor. Shows insecticidal activity when injected into mealworms. This chain is Orally active insecticidal peptide-3, found in Selenotypus plumipes (Australian featherleg tarantula).